We begin with the raw amino-acid sequence, 141 residues long: Proteasome maturation protein (141 aa).

Lysine 39 participates in a covalent cross-link: Glycyl lysine isopeptide (Lys-Gly) (interchain with G-Cter in SUMO2).

The protein belongs to the POMP/UMP1 family. As to quaternary structure, constituent of preproteasomes, but not of mature 20S proteasomes. Within the preproteasome, may directly interact with PSMB1/beta6, PSMB4/beta7, PSMB5/beta5, PSMB6/beta1 and PSMB9/beta1i. Interaction with PSMB8/beta5i is controversial. Forms tetramers.

It is found in the cytoplasm. The protein localises to the cytosol. The protein resides in the nucleus. Its subcellular location is the microsome membrane. Functionally, molecular chaperone essential for the assembly of standard proteasomes and immunoproteasomes. Degraded after completion of proteasome maturation. Mediates the association of 20S preproteasome with the endoplasmic reticulum. In Bos taurus (Bovine), this protein is Proteasome maturation protein (POMP).